Here is a 152-residue protein sequence, read N- to C-terminus: Aspartate carbamoyltransferase regulatory chain (152 aa).

Cys108, Cys113, Cys137, and Cys140 together coordinate Zn(2+).

This sequence belongs to the PyrI family. Contains catalytic and regulatory chains. Zn(2+) is required as a cofactor.

In terms of biological role, involved in allosteric regulation of aspartate carbamoyltransferase. The protein is Aspartate carbamoyltransferase regulatory chain of Neisseria meningitidis serogroup B (strain ATCC BAA-335 / MC58).